A 178-amino-acid polypeptide reads, in one-letter code: Large ribosomal subunit protein uL6 (178 aa).

It belongs to the universal ribosomal protein uL6 family. As to quaternary structure, part of the 50S ribosomal subunit.

In terms of biological role, this protein binds to the 23S rRNA, and is important in its secondary structure. It is located near the subunit interface in the base of the L7/L12 stalk, and near the tRNA binding site of the peptidyltransferase center. The polypeptide is Large ribosomal subunit protein uL6 (Corynebacterium jeikeium (strain K411)).